Consider the following 180-residue polypeptide: ATP-dependent protease subunit HslV (180 aa).

Residue threonine 5 is part of the active site. Na(+) is bound by residues glycine 161, cysteine 164, and threonine 167.

The protein belongs to the peptidase T1B family. HslV subfamily. In terms of assembly, a double ring-shaped homohexamer of HslV is capped on each side by a ring-shaped HslU homohexamer. The assembly of the HslU/HslV complex is dependent on binding of ATP.

It localises to the cytoplasm. It catalyses the reaction ATP-dependent cleavage of peptide bonds with broad specificity.. With respect to regulation, allosterically activated by HslU binding. Protease subunit of a proteasome-like degradation complex believed to be a general protein degrading machinery. The protein is ATP-dependent protease subunit HslV of Campylobacter curvus (strain 525.92).